Here is a 58-residue protein sequence, read N- to C-terminus: Sec-independent protein translocase protein TatA (58 aa).

The helical transmembrane segment at Met-1–Phe-21 threads the bilayer.

This sequence belongs to the TatA/E family. Forms a complex with TatC.

Its subcellular location is the cell membrane. Functionally, part of the twin-arginine translocation (Tat) system that transports large folded proteins containing a characteristic twin-arginine motif in their signal peptide across membranes. TatA could form the protein-conducting channel of the Tat system. This chain is Sec-independent protein translocase protein TatA, found in Bacillus cytotoxicus (strain DSM 22905 / CIP 110041 / 391-98 / NVH 391-98).